Consider the following 190-residue polypeptide: MTDTTVEAPATPRLKVKYNEQIIPELEKEFKYSNPMQVARVQKVVVSMGVGAAARDSKLIEGAVKDLTLITGQKPKITKAKKSVAQFHLREGQAIGAYVTLRGDRMWEFLDRLLTLALPRIRDFRGINGHQFDGQGNYNFGLTEQSMFHEIDPDSIDHVRGMDITVVTSTKDDKEAYALLKHLGFPFKEN.

It belongs to the universal ribosomal protein uL5 family. As to quaternary structure, part of the 50S ribosomal subunit; part of the 5S rRNA/L5/L18/L25 subcomplex. Contacts the 5S rRNA and the P site tRNA. Forms a bridge to the 30S subunit in the 70S ribosome.

Functionally, this is one of the proteins that bind and probably mediate the attachment of the 5S RNA into the large ribosomal subunit, where it forms part of the central protuberance. In the 70S ribosome it contacts protein S13 of the 30S subunit (bridge B1b), connecting the 2 subunits; this bridge is implicated in subunit movement. Contacts the P site tRNA; the 5S rRNA and some of its associated proteins might help stabilize positioning of ribosome-bound tRNAs. The protein is Large ribosomal subunit protein uL5 of Bifidobacterium longum (strain DJO10A).